Here is a 431-residue protein sequence, read N- to C-terminus: Transcription factor Sp7 (431 aa).

The disordered stretch occupies residues 30–56 (SSPLRDSTTLGKAGTKKPYSVGSDLSA). An N6-propionyllysine mark is found at K41 and K45. K58 participates in a covalent cross-link: Glycyl lysine isopeptide (Lys-Gly) (interchain with G-Cter in ubiquitin). Disordered stretches follow at residues 71-115 (TNGL…VPKG) and 154-260 (TPTP…SGGY). Positions 156 to 164 (TPWWDMHPG) match the 9aaTAD motif. The span at 166-178 (NWLGGGQGQGDGL) shows a compositional bias: gly residues. Residue K230 forms a Glycyl lysine isopeptide (Lys-Gly) (interchain with G-Cter in ubiquitin) linkage. 3 consecutive C2H2-type zinc fingers follow at residues 294 to 318 (HSCH…LRWH), 324 to 348 (FVCN…VRTH), and 354 to 376 (FTCL…QRTH). N6-propionyllysine is present on residues K361 and K371. The disordered stretch occupies residues 367-431 (DHLSKHQRTH…SPEQSNLLEI (65 aa)). A compositionally biased stretch (polar residues) spans 403-412 (SQTPRPSASP).

Belongs to the Sp1 C2H2-type zinc-finger protein family. In terms of assembly, interacts with RIOX1; the interaction is direct and inhibits transcription activator activity. Post-translationally, ubiquitination at leads to proteasomal degradation. SP7 is a short-live protein with an endogenous half-life of approximately 12 hours. In terms of processing, propionylated. Depropionylation at Lys-371 by SIRT7 activates transcription factor activity and positively regulates bone formation by osteoblasts. As to expression, restricted to bone-derived cell.

Its subcellular location is the nucleus. Transcriptional activator essential for osteoblast differentiation. Binds to SP1 and EKLF consensus sequences and to other G/C-rich sequences. This is Transcription factor Sp7 (SP7) from Homo sapiens (Human).